A 459-amino-acid polypeptide reads, in one-letter code: 4,4'-diaponeurosporen-aldehyde dehydrogenase (459 aa).

Residues 114–115 and 188–189 contribute to the NAD(+) site; these read FN and GS. Glu210 serves as the catalytic Proton acceptor. An NAD(+)-binding site is contributed by Met211. Residue Cys244 is the Nucleophile of the active site. Glu336 provides a ligand contact to NAD(+).

Belongs to the aldehyde dehydrogenase family.

The catalysed reaction is 4,4'-diaponeurosporenal + NAD(+) + H2O = 4,4'-diaponeurosporenoate + NADH + 2 H(+). It functions in the pathway carotenoid biosynthesis; staphyloxanthin biosynthesis; staphyloxanthin from farnesyl diphosphate. In terms of biological role, involved in the biosynthesis of the yellow-orange carotenoid staphyloxanthin, which plays a role in the virulence via its protective function against oxidative stress. Catalyzes the oxidation of 4,4'-diaponeurosporen-4-al to yield 4,4'-diaponeurosporenoic acid. In Staphylococcus aureus (strain NCTC 8325 / PS 47), this protein is 4,4'-diaponeurosporen-aldehyde dehydrogenase.